A 473-amino-acid polypeptide reads, in one-letter code: H(+)/Cl(-) exchange transporter ClcA (473 aa).

At 1-32 (MKTDTPSLETPQAARLRRRQLIRQLLERDKTP) the chain is on the cytoplasmic side. The helical transmembrane segment at 33–69 (LAILFMAAVVGTLVGLAAVAFDKGVAWLQNQRMGALV) threads the bilayer. Residues 70–76 (HTADNYP) lie on the Periplasmic side of the membrane. Residues 77–100 (LLLTVAFLCSAVLAMFGYFLVRKY) form a helical membrane-spanning segment. Residues 106 to 110 (GSGIP) carry the Selectivity filter part_1 motif. A chloride-binding site is contributed by Ser107. Positions 109–116 (IPEIEGAL) form an intramembrane region, helical. The Cytoplasmic segment spans residues 117 to 123 (EDQRPVR). A run of 2 helical transmembrane segments spans residues 124 to 141 (WWRV…TLGG) and 148 to 166 (EGPT…LDIF). A Selectivity filter part_2 motif is present at residues 146 to 150 (GREGP). Topologically, residues 167 to 176 (RLKGDEARHT) are cytoplasmic. Intramembrane regions (helical) lie at residues 177-189 (LLAT…LAAA) and 193-201 (PLAGILFII). Topologically, residues 202–214 (EEMRPQFRYTLIS) are cytoplasmic. The chain crosses the membrane as a helical span at residues 215-232 (IKAVFIGVIMSTIMYRIF). Residues 233-252 (NHEVALIDVGKLSDAPLNTQ) lie on the Periplasmic side of the membrane. The chain crosses the membrane as a helical span at residues 253-281 (WLYLILGIIFGIFGPIFNKWVLGMQDLLH). Residues 282–287 (RVHGGN) are Cytoplasmic-facing. The chain crosses the membrane as a helical span at residues 288 to 309 (ITKWVLMGGAIGGLCGLLGFVA). The Periplasmic segment spans residues 310–329 (PATSGGGFNLIPIATAGNFS). 2 helical membrane passes run 330–349 (MGML…LCFS) and 355–376 (GIFA…MVVV). The Selectivity filter part_3 motif lies at 355–359 (GIFAP). The chloride site is built by Ile356 and Phe357. The Periplasmic segment spans residues 377–386 (ELFPQYHLEA). An intramembrane region (helical) is located at residues 387–401 (GTFAIAGMGALLAAS). The note=Loop between two helices intramembrane region spans 402–404 (IRA). An intramembrane region (helical) is located at residues 405–416 (PLTGIILVLEMT). Positions 417–421 (DNYQL) form an intramembrane region, note=Loop between two helices. A helical membrane pass occupies residues 422 to 438 (ILPMIITGLGATLLAQF). Over 439-473 (TGGKPLYSAILARTLAKQEAEQLARSKAASASENT) the chain is Cytoplasmic. Tyr445 contributes to the chloride binding site.

The protein belongs to the chloride channel (TC 2.A.49) family. ClcA subfamily. As to quaternary structure, homodimer.

Its subcellular location is the cell inner membrane. It carries out the reaction 2 chloride(in) + H(+)(out) = 2 chloride(out) + H(+)(in). In terms of biological role, proton-coupled chloride transporter. Functions as antiport system and exchanges two chloride ions for 1 proton. Probably acts as an electrical shunt for an outwardly-directed proton pump that is linked to amino acid decarboxylation, as part of the extreme acid resistance (XAR) response. This is H(+)/Cl(-) exchange transporter ClcA from Shigella boydii serotype 18 (strain CDC 3083-94 / BS512).